The chain runs to 308 residues: tRNA dimethylallyltransferase (308 aa).

10–17 (GPTASGKT) lines the ATP pocket. 12–17 (TASGKT) serves as a coordination point for substrate. Interaction with substrate tRNA regions lie at residues 35–38 (DSSL) and 159–163 (QRIFR).

The protein belongs to the IPP transferase family. Monomer. The cofactor is Mg(2+).

The catalysed reaction is adenosine(37) in tRNA + dimethylallyl diphosphate = N(6)-dimethylallyladenosine(37) in tRNA + diphosphate. Functionally, catalyzes the transfer of a dimethylallyl group onto the adenine at position 37 in tRNAs that read codons beginning with uridine, leading to the formation of N6-(dimethylallyl)adenosine (i(6)A). The chain is tRNA dimethylallyltransferase from Francisella philomiragia subsp. philomiragia (strain ATCC 25017 / CCUG 19701 / FSC 153 / O#319-036).